The primary structure comprises 569 residues: Urease subunit alpha (569 aa).

One can recognise a Urease domain in the interval 131–569 (GSIDTHIHFI…VPMAQRYFLL (439 aa)). Ni(2+)-binding residues include His-136, His-138, and Lys-219. Lys-219 carries the post-translational modification N6-carboxylysine. Substrate is bound at residue His-221. Ni(2+)-binding residues include His-248 and His-274. The Proton donor role is filled by His-322. Residue Asp-362 participates in Ni(2+) binding.

It belongs to the metallo-dependent hydrolases superfamily. Urease alpha subunit family. As to quaternary structure, heterotrimer of UreA (gamma), UreB (beta) and UreC (alpha) subunits. Three heterotrimers associate to form the active enzyme. Ni cation serves as cofactor. In terms of processing, carboxylation allows a single lysine to coordinate two nickel ions.

Its subcellular location is the cytoplasm. The enzyme catalyses urea + 2 H2O + H(+) = hydrogencarbonate + 2 NH4(+). Its pathway is nitrogen metabolism; urea degradation; CO(2) and NH(3) from urea (urease route): step 1/1. This Prochlorococcus marinus (strain MIT 9301) protein is Urease subunit alpha.